A 416-amino-acid chain; its full sequence is Serine hydroxymethyltransferase (416 aa).

(6S)-5,6,7,8-tetrahydrofolate-binding positions include L121 and 125–127 (GHL). An N6-(pyridoxal phosphate)lysine modification is found at K229.

The protein belongs to the SHMT family. As to quaternary structure, homodimer. It depends on pyridoxal 5'-phosphate as a cofactor.

The protein resides in the cytoplasm. The enzyme catalyses (6R)-5,10-methylene-5,6,7,8-tetrahydrofolate + glycine + H2O = (6S)-5,6,7,8-tetrahydrofolate + L-serine. It participates in one-carbon metabolism; tetrahydrofolate interconversion. It functions in the pathway amino-acid biosynthesis; glycine biosynthesis; glycine from L-serine: step 1/1. Its function is as follows. Catalyzes the reversible interconversion of serine and glycine with tetrahydrofolate (THF) serving as the one-carbon carrier. This reaction serves as the major source of one-carbon groups required for the biosynthesis of purines, thymidylate, methionine, and other important biomolecules. Also exhibits THF-independent aldolase activity toward beta-hydroxyamino acids, producing glycine and aldehydes, via a retro-aldol mechanism. The protein is Serine hydroxymethyltransferase of Neisseria meningitidis serogroup B (strain ATCC BAA-335 / MC58).